Reading from the N-terminus, the 135-residue chain is Centromere protein S (135 aa).

Residues 103–135 (SLEQKEKKKKKSVSGGNVSRNSDMDTVVPESKD) are disordered.

This sequence belongs to the TAF9 family. CENP-S/MHF1 subfamily. Heterodimer with CENPX, sometimes called MHF; this interaction stabilizes both partners. MHF heterodimers can assemble to form tetrameric structures. MHF also coassemble with CENPT-CENPW heterodimers at centromeres to form the tetrameric CENP-T-W-S-X complex. Forms a discrete complex with FANCM and CENPX, called FANCM-MHF; this interaction, probably mediated by direct binding between CENPS and FANCM, leads to synergistic activation of double-stranded DNA binding and strongly stimulates FANCM-mediated DNA remodeling. Recruited by FANCM to the Fanconi anemia (FA) core complex, which consists of CENPS, CENPX, FANCA, FANCB, FANCC, FANCE, FANCF, FANCG, FANCL, FANCM, FAAP24 and FAAP100. The FA core complex associates with Bloom syndrome (BLM) complex, which consists of at least BLM, DNA topoisomerase 3-alpha (TOP3A), RMI1/BLAP75, RPA1/RPA70 and RPA2/RPA32. The super complex between FA and BLM is called BRAFT. Component of the CENPA-CAD complex, composed of CENPI, CENPK, CENPL, CENPO, CENPP, CENPQ, CENPR and CENPS. The CENPA-CAD complex is probably recruited on centromeres by the CENPA-NAC complex, at least composed of CENPA, CENPC, CENPH, CENPM, CENPN, CENPT and CENPU.

The protein localises to the nucleus. Its subcellular location is the chromosome. It localises to the centromere. The protein resides in the kinetochore. Its function is as follows. DNA-binding component of the Fanconi anemia (FA) core complex. Required for the normal activation of the FA pathway, leading to monoubiquitination of the FANCI-FANCD2 complex in response to DNA damage, cellular resistance to DNA cross-linking drugs, and prevention of chromosomal breakage. In complex with CENPX (MHF heterodimer), crucial cofactor for FANCM in both binding and ATP-dependent remodeling of DNA. Stabilizes FANCM. In complex with CENPX and FANCM (but not other FANC proteins), rapidly recruited to blocked forks and promotes gene conversion at blocked replication forks. In complex with CENPT, CENPW and CENPX (CENP-T-W-S-X heterotetramer), involved in the formation of a functional kinetochore outer plate, which is essential for kinetochore-microtubule attachment and faithful mitotic progression. As a component of MHF and CENP-T-W-S-X complexes, binds DNA and bends it to form a nucleosome-like structure. DNA-binding function is fulfilled in the presence of CENPX, with the following preference for DNA substates: Holliday junction &gt; double-stranded &gt; splay arm &gt; single-stranded. Does not bind DNA on its own. In Xenopus laevis (African clawed frog), this protein is Centromere protein S (cenps).